We begin with the raw amino-acid sequence, 1156 residues long: Cartilage intermediate layer protein 2 (1156 aa).

The first 20 residues, 1-20, serve as a signal peptide directing secretion; the sequence is MASLLPLLCLCVVAAHLAGA. The region spanning 146–197 is the TSP type-1 domain; it reads EASWGAWGPWGPCSGSCGPGRRLRRRHCPSPAGDACPGRPLEAQKCVRPRCP. Cystine bridges form between C158-C191, C162-C196, and C173-C181. Residues N276, N308, and N329 are each glycosylated (N-linked (GlcNAc...) asparagine). Residues 292-376 form the Ig-like C2-type domain; it reads PYLVKHPESR…AVRSGTARLT (85 aa). An intrachain disulfide couples C313 to C359. Residues 1134–1156 form a disordered region; the sequence is SEAAQAQARASGPLRTRRGRVRQ.

In terms of processing, may be cleaved into 2 chains possibly by a furin-like protease upon or preceding secretion. In terms of tissue distribution, expressed in articular chondrocytes but not in knee meniscal cartilage cells. Localizes to the intermediate to deep zone of articular cartilage.

It is found in the secreted. Its subcellular location is the extracellular space. The protein resides in the extracellular matrix. May play a role in cartilage scaffolding. This is Cartilage intermediate layer protein 2 (CILP2) from Homo sapiens (Human).